The sequence spans 267 residues: Glucosamine-6-phosphate deaminase (267 aa).

Catalysis depends on aspartate 72, which acts as the Proton acceptor; for enolization step. Residue aspartate 141 is the For ring-opening step of the active site. The active-site Proton acceptor; for ring-opening step is the histidine 143. The For ring-opening step role is filled by glutamate 148.

This sequence belongs to the glucosamine/galactosamine-6-phosphate isomerase family. NagB subfamily. Homohexamer.

The enzyme catalyses alpha-D-glucosamine 6-phosphate + H2O = beta-D-fructose 6-phosphate + NH4(+). The protein operates within amino-sugar metabolism; N-acetylneuraminate degradation; D-fructose 6-phosphate from N-acetylneuraminate: step 5/5. Its activity is regulated as follows. Allosterically activated by N-acetylglucosamine 6-phosphate (GlcNAc6P). In terms of biological role, catalyzes the reversible isomerization-deamination of glucosamine 6-phosphate (GlcN6P) to form fructose 6-phosphate (Fru6P) and ammonium ion. The polypeptide is Glucosamine-6-phosphate deaminase (Pasteurella multocida (strain Pm70)).